Here is a 496-residue protein sequence, read N- to C-terminus: Histidine--tRNA ligase (496 aa).

It belongs to the class-II aminoacyl-tRNA synthetase family. In terms of assembly, homodimer.

The protein localises to the cytoplasm. The enzyme catalyses tRNA(His) + L-histidine + ATP = L-histidyl-tRNA(His) + AMP + diphosphate + H(+). The chain is Histidine--tRNA ligase from Bartonella bacilliformis (strain ATCC 35685 / KC583 / Herrer 020/F12,63).